Consider the following 279-residue polypeptide: Esterase CG5412 (279 aa).

Active-site charge relay system residues include S133, D191, and H218. Residues 249 to 279 (QSGNASFVDSGAEDDNDAEVAAMTAELDESD) are disordered.

Belongs to the LovG family.

The protein is Esterase CG5412 of Drosophila melanogaster (Fruit fly).